Consider the following 138-residue polypeptide: Basic phospholipase A2 homolog Vur-S49 (138 aa).

The first 16 residues, 1-16 (MRALWIVAVCLIGVEG), serve as a signal peptide directing secretion. 7 disulfides stabilise this stretch: Cys-42/Cys-131, Cys-44/Cys-60, Cys-59/Cys-111, Cys-65/Cys-138, Cys-66/Cys-104, Cys-73/Cys-97, and Cys-91/Cys-102. The segment at 121–133 (KKYKVYLRFKCKG) is important for membrane-damaging activities in eukaryotes and bacteria; heparin-binding.

Belongs to the phospholipase A2 family. Group II subfamily. S49 sub-subfamily. Expressed by the venom gland.

The protein localises to the secreted. Functionally, snake venom phospholipase A2 homolog that lacks enzymatic activity. Is able to suppress the acetylcholine (ACh)-evoked current mediated by alpha-7 (CHRNA7)-similar nAChRs in L.stagnalis neurons (IC(50)=2.18 uM). This activity is only partially reversible and seems to be non-competitive. In Vipera renardi (Steppe viper), this protein is Basic phospholipase A2 homolog Vur-S49.